Reading from the N-terminus, the 1473-residue chain is Ovostatin (1473 aa).

The first 36 residues, 1–36, serve as a signal peptide directing secretion; it reads MHCFLGREILSFFCLTVRKMWLKFILAILLLHAAAG. 13 N-linked (GlcNAc...) asparagine glycosylation sites follow: Asn67, Asn82, Asn89, Asn191, Asn342, Asn403, Asn527, Asn588, Asn757, Asn1141, Asn1221, Asn1315, and Asn1347.

Belongs to the protease inhibitor I39 (alpha-2-macroglobulin) family. Homotetramer, which consists of two pairs of disulfide-linked chains. Lacks the thioester bond found in other members of this family. Post-translationally, glycosylated; contains 56 glucosamine units per subunit.

The protein resides in the secreted. In terms of biological role, is able to inhibit all four classes of proteinases by a unique 'trapping' mechanism. This protein has a peptide stretch, called the 'bait region' which contains specific cleavage sites for different proteinases. When a proteinase cleaves the bait region, a conformational change is induced in the protein which traps the proteinase. The entrapped enzyme remains active against low molecular weight substrates (activity against high molecular weight substrates is greatly reduced). This chain is Ovostatin, found in Gallus gallus (Chicken).